Reading from the N-terminus, the 539-residue chain is Phosphoenolpyruvate carboxykinase (ATP) (539 aa).

Residues Arg-64, Tyr-206, and Lys-212 each contribute to the substrate site. ATP contacts are provided by residues Lys-212, His-231, and 247-255; that span reads GLSGTGKTT. Mn(2+) is bound by residues Lys-212 and His-231. Asp-268 provides a ligand contact to Mn(2+). ATP contacts are provided by residues Glu-296, Arg-332, 448-449, and Thr-454; that span reads RI. Arg-332 contacts substrate.

Belongs to the phosphoenolpyruvate carboxykinase (ATP) family. As to quaternary structure, monomer. It depends on Mn(2+) as a cofactor.

It localises to the cytoplasm. The enzyme catalyses oxaloacetate + ATP = phosphoenolpyruvate + ADP + CO2. It functions in the pathway carbohydrate biosynthesis; gluconeogenesis. Its function is as follows. Involved in the gluconeogenesis. Catalyzes the conversion of oxaloacetate (OAA) to phosphoenolpyruvate (PEP) through direct phosphoryl transfer between the nucleoside triphosphate and OAA. In Cronobacter sakazakii (strain ATCC BAA-894) (Enterobacter sakazakii), this protein is Phosphoenolpyruvate carboxykinase (ATP).